The chain runs to 232 residues: Fibrillarin-like rRNA/tRNA 2'-O-methyltransferase (232 aa).

S-adenosyl-L-methionine is bound by residues 89-90 (TT), 108-109 (EF), 133-134 (DA), and 153-156 (DIAQ).

It belongs to the methyltransferase superfamily. Fibrillarin family. In terms of assembly, interacts with nop5. Component of box C/D small ribonucleoprotein (sRNP) particles that contain rpl7ae, FlpA and nop5, plus a guide RNA.

In terms of biological role, involved in pre-rRNA and tRNA processing. Utilizes the methyl donor S-adenosyl-L-methionine to catalyze the site-specific 2'-hydroxyl methylation of ribose moieties in rRNA and tRNA. Site specificity is provided by a guide RNA that base pairs with the substrate. Methylation occurs at a characteristic distance from the sequence involved in base pairing with the guide RNA. This Saccharolobus islandicus (strain L.S.2.15 / Lassen #1) (Sulfolobus islandicus) protein is Fibrillarin-like rRNA/tRNA 2'-O-methyltransferase.